Consider the following 452-residue polypeptide: Trigger factor (452 aa).

A PPIase FKBP-type domain is found at 170-256 (DSIVKVDFVE…IKSIKKRDLP (87 aa)).

It belongs to the FKBP-type PPIase family. Tig subfamily.

The protein localises to the cytoplasm. It carries out the reaction [protein]-peptidylproline (omega=180) = [protein]-peptidylproline (omega=0). Involved in protein export. Acts as a chaperone by maintaining the newly synthesized protein in an open conformation. Functions as a peptidyl-prolyl cis-trans isomerase. The sequence is that of Trigger factor from Borreliella afzelii (strain PKo) (Borrelia afzelii).